A 340-amino-acid chain; its full sequence is MSDSEEEIKQNTDPVDNAWSLKIPAFRQEDNPHGMVEESSFATLFPKYREKYLREVWPLVEQCVAEHQLKAELDLVEGSMVVKTTRKTWDPYIIIKSRDMIKLMARSVPFEQAKRVLQDDIGCDIIKIGNLVHKKEKFVKRRQRLIGPNGATLKSIELLTDCYVLVQGNTVSALGPYKGLQQVRDIVLETMNNVHPIYNIKALMIKRELMKDPKLANEDWSRFLPKFKNKNISKRKQPKSKKPKKEYTPFPPAQPESKIDKQLASGEYFLNQEQKQAKRNQERSAKQADAAKKQDERRNKDFVPPTEEAPSRKRQAEDSSKVDVKALKAKLVKANKKSKS.

A KH domain is found at 124 to 192; sequence DIIKIGNLVH…VRDIVLETMN (69 aa). Residues 228-244 show a composition bias toward basic residues; the sequence is KNKNISKRKQPKSKKPK. Disordered stretches follow at residues 228 to 259 and 271 to 324; these read KNKNISKRKQPKSKKPKKEYTPFPPAQPESKI and NQEQ…KVDV. Residues 269–302 adopt a coiled-coil conformation; it reads FLNQEQKQAKRNQERSAKQADAAKKQDERRNKDF. 2 stretches are compositionally biased toward basic and acidic residues: residues 275–301 and 309–324; these read KQAKRNQERSAKQADAAKKQDERRNKD and APSRKRQAEDSSKVDV.

It belongs to the KRR1 family. Monomer. Component of the ribosomal small subunit (SSU) processome.

It is found in the nucleus. The protein resides in the nucleolus. Its function is as follows. Required for 40S ribosome biogenesis. Involved in nucleolar processing of pre-18S ribosomal RNA and ribosome assembly. Binds to RNA. Required for female germline development, cell viability during eye development and for survival of dividing cells and epithelial cells during early wing disk development. The chain is KRR1 small subunit processome component homolog from Drosophila persimilis (Fruit fly).